The following is a 450-amino-acid chain: Glucose-6-phosphate isomerase (450 aa).

The Proton donor role is filled by Glu291. Residues His312 and Lys426 contribute to the active site.

It belongs to the GPI family.

The protein localises to the cytoplasm. The catalysed reaction is alpha-D-glucose 6-phosphate = beta-D-fructose 6-phosphate. The protein operates within carbohydrate biosynthesis; gluconeogenesis. It participates in carbohydrate degradation; glycolysis; D-glyceraldehyde 3-phosphate and glycerone phosphate from D-glucose: step 2/4. Catalyzes the reversible isomerization of glucose-6-phosphate to fructose-6-phosphate. The sequence is that of Glucose-6-phosphate isomerase from Clostridium perfringens (strain SM101 / Type A).